An 845-amino-acid polypeptide reads, in one-letter code: AdoMet-dependent rRNA methyltransferase SPB1 (845 aa).

Residues G58, W60, D78, D94, and D119 each coordinate S-adenosyl-L-methionine. K159 (proton acceptor) is an active-site residue. Disordered stretches follow at residues 223-247 (GGGN…SQRQ) and 279-298 (SLNK…DDDH). 2 coiled-coil regions span residues 366 to 402 (TEEQ…KEII) and 464 to 502 (DEEE…ERDA). The span at 496-512 (RKAERDANYRAKQARGD) shows a compositional bias: basic and acidic residues. Disordered regions lie at residues 496–546 (RKAE…DDDE), 587–660 (ENKT…HQQK), and 788–821 (KLNK…VKGK). Acidic residues-rich tracts occupy residues 513–528 (ADDE…NDDV), 536–545 (MESESDDDDD), 610–624 (NEND…ESDF), and 633–648 (DDDD…DDEV). Residues 739 to 796 (IKKVLEAQSRKKLRALKRLEKIKKKSDLINEDSGKSERDKADEISKLMKKLNKKQKQK) are a coiled coil. Basic residues predominate over residues 788 to 797 (KLNKKQKQKP).

The protein belongs to the class I-like SAM-binding methyltransferase superfamily. RNA methyltransferase RlmE family. SPB1 subfamily. In terms of assembly, component of the nucleolar and nucleoplasmic pre-60S ribosomal particle.

It localises to the nucleus. The protein localises to the nucleolus. The catalysed reaction is a ribonucleotide in rRNA + S-adenosyl-L-methionine = a 2'-O-methylribonucleotide in rRNA + S-adenosyl-L-homocysteine + H(+). Functionally, required for proper assembly of pre-ribosomal particles during the biogenesis of the 60S ribosomal subunit. The polypeptide is AdoMet-dependent rRNA methyltransferase SPB1 (Candida albicans (strain SC5314 / ATCC MYA-2876) (Yeast)).